The sequence spans 478 residues: Putative multidrug resistance outer membrane protein MdtQ (478 aa).

Positions 1–21 (MNRDSFYPAIACFPLLLMLAG) are cleaved as a signal peptide. C22 carries the N-palmitoyl cysteine lipid modification. C22 is lipidated: S-diacylglycerol cysteine.

Belongs to the outer membrane factor (OMF) (TC 1.B.17) family.

Its subcellular location is the cell outer membrane. Could be involved in resistance to puromycin, acriflavine and tetraphenylarsonium chloride. The polypeptide is Putative multidrug resistance outer membrane protein MdtQ (mdtQ) (Shigella flexneri).